The chain runs to 325 residues: Protein ORANGE-ORANGE, chloroplastic (325 aa).

A chloroplast-targeting transit peptide spans 1 to 54 (MDRVLVASYPINHLIRPHSFRIDYCWSTCFTSRLNSGKERQKLSSRWRWRSMAS). The segment covering 53-71 (ASDSTDSSSSSSFAPSVES) has biased composition (low complexity). Residues 53 to 77 (ASDSTDSSSSSSFAPSVESDPSDKT) form a disordered region. A run of 2 helical transmembrane segments spans residues 164 to 184 (LYYVTCYSLIAGIILFGGLLA) and 217 to 237 (IVASFSGGAVGVISALMVVEV). Positions 226–317 (VGVISALMVV…CTGMAMASEH (92 aa)) are CR-type-like. The CXXCXGXG motif repeat unit spans residues 248-255 (CKYCLGTG). Residues 259-266 (CARCSNTG) form a CXXCXXXG motif repeat. The stretch at 292–299 (CQNCSGSG) is one CXXCXGXG motif repeat. The CXXCXXXG motif repeat unit spans residues 303-310 (CPTCLCTG).

This sequence belongs to the orange-like family.

The protein localises to the plastid. Its subcellular location is the chloroplast membrane. In terms of biological role, triggers accumulation of carotenoids, mainly beta-carotene, in fruit flesh. The chain is Protein ORANGE-ORANGE, chloroplastic from Cucumis melo (Muskmelon).